We begin with the raw amino-acid sequence, 125 residues long: Large ribosomal subunit protein bL12 (125 aa).

This sequence belongs to the bacterial ribosomal protein bL12 family. In terms of assembly, homodimer. Part of the ribosomal stalk of the 50S ribosomal subunit. Forms a multimeric L10(L12)X complex, where L10 forms an elongated spine to which 2 to 4 L12 dimers bind in a sequential fashion. Binds GTP-bound translation factors.

Functionally, forms part of the ribosomal stalk which helps the ribosome interact with GTP-bound translation factors. Is thus essential for accurate translation. This Thermoanaerobacter sp. (strain X514) protein is Large ribosomal subunit protein bL12.